The following is a 432-amino-acid chain: Trigger factor (432 aa).

Positions 161-246 constitute a PPIase FKBP-type domain; sequence EDRVTIDFTG…LKKVEERELP (86 aa).

It belongs to the FKBP-type PPIase family. Tig subfamily. As to quaternary structure, homodimer and monomer. In vivo most of the ribosomes are in complex with monomeric TF. Uncomplexed TF, however, is in a monomer-dimer equilibrium with approximately two thirds of TF existing in a dimeric state.

The protein localises to the cytoplasm. The enzyme catalyses [protein]-peptidylproline (omega=180) = [protein]-peptidylproline (omega=0). Functionally, involved in protein export. Acts as a chaperone by maintaining the newly synthesized protein in an open conformation. Functions as a peptidyl-prolyl cis-trans isomerase. This is Trigger factor from Shigella boydii serotype 4 (strain Sb227).